The following is a 404-amino-acid chain: Pleckstrin homology domain-containing family A member 1 (404 aa).

PH domains follow at residues 7–112 (QNRI…KAIK) and 191–289 (AVIK…GAIV). Disordered regions lie at residues 291–332 (QRGP…RSNS) and 355–404 (NFKV…VSDV). Residues 316-332 (TNAATATSHSTASRSNS) are compositionally biased toward low complexity. Residues S332 and S362 each carry the phosphoserine modification.

As to quaternary structure, interacts with MPDZ and PTPN13. In terms of tissue distribution, highly expressed in skeletal muscle, thymus, pancreas, placenta and lung. Detected at low levels in brain, heart, peripheral blood leukocytes, testis, ovary, spinal cord, thyroid, kidney, liver, small intestine and colon.

The protein resides in the cytoplasm. It is found in the cell membrane. It localises to the nucleus. Its function is as follows. Binds specifically to phosphatidylinositol 3,4-diphosphate (PtdIns3,4P2), but not to other phosphoinositides. May recruit other proteins to the plasma membrane. In Homo sapiens (Human), this protein is Pleckstrin homology domain-containing family A member 1 (PLEKHA1).